Reading from the N-terminus, the 948-residue chain is Protein translocase subunit SecA (948 aa).

ATP is bound by residues Q90, 108–112 (GEGKT), and D509.

The protein belongs to the SecA family. As to quaternary structure, monomer and homodimer. Part of the essential Sec protein translocation apparatus which comprises SecA, SecYEG and auxiliary proteins SecDF. Other proteins may also be involved.

It localises to the cell inner membrane. The protein resides in the cellular thylakoid membrane. Its subcellular location is the cytoplasm. It carries out the reaction ATP + H2O + cellular proteinSide 1 = ADP + phosphate + cellular proteinSide 2.. Part of the Sec protein translocase complex. Interacts with the SecYEG preprotein conducting channel. Has a central role in coupling the hydrolysis of ATP to the transfer of proteins into and across the cell membrane, serving as an ATP-driven molecular motor driving the stepwise translocation of polypeptide chains across the membrane. Its function is as follows. Probably participates in protein translocation into and across both the cytoplasmic and thylakoid membranes in cyanobacterial cells. The polypeptide is Protein translocase subunit SecA (Prochlorococcus marinus (strain MIT 9313)).